A 587-amino-acid polypeptide reads, in one-letter code: 5-aminolevulinate synthase, erythroid-specific, mitochondrial (587 aa).

The N-terminal 49 residues, 1–49 (MVAAAMLLRSCPVLSKGPTGLLGKVAKTYQFLFGIGRCPILATQGPTCS), are a transit peptide targeting the mitochondrion. R163 is a succinyl-CoA binding site. Pyridoxal 5'-phosphate-binding residues include C258 and F259. The succinyl-CoA site is built by S280 and K299. Pyridoxal 5'-phosphate-binding residues include S332, H360, and T388. The active site involves K391. Residue K391 is modified to N6-(pyridoxal phosphate)lysine. Pyridoxal 5'-phosphate-binding residues include T420 and T421. A succinyl-CoA-binding site is contributed by T508.

It belongs to the class-II pyridoxal-phosphate-dependent aminotransferase family. In terms of assembly, homodimer. Interacts with SUCLA2. It depends on pyridoxal 5'-phosphate as a cofactor. As to expression, erythroid-specific.

The protein localises to the mitochondrion inner membrane. The enzyme catalyses succinyl-CoA + glycine + H(+) = 5-aminolevulinate + CO2 + CoA. It functions in the pathway porphyrin-containing compound metabolism; protoporphyrin-IX biosynthesis; 5-aminolevulinate from glycine: step 1/1. Its function is as follows. Catalyzes the pyridoxal 5'-phosphate (PLP)-dependent condensation of succinyl-CoA and glycine to form aminolevulinic acid (ALA), with CoA and CO2 as by-products. Contributes significantly to heme formation during erythropoiesis. This Rattus norvegicus (Rat) protein is 5-aminolevulinate synthase, erythroid-specific, mitochondrial (Alas2).